Reading from the N-terminus, the 353-residue chain is Beta-hexosaminidase (353 aa).

Residues D74, R82, R149, and 179-180 (KH) each bind substrate. The active-site Proton donor/acceptor is the H192. D263 functions as the Nucleophile in the catalytic mechanism.

It belongs to the glycosyl hydrolase 3 family. NagZ subfamily.

Its subcellular location is the cytoplasm. The catalysed reaction is Hydrolysis of terminal non-reducing N-acetyl-D-hexosamine residues in N-acetyl-beta-D-hexosaminides.. It functions in the pathway cell wall biogenesis; peptidoglycan recycling. In terms of biological role, plays a role in peptidoglycan recycling by cleaving the terminal beta-1,4-linked N-acetylglucosamine (GlcNAc) from peptide-linked peptidoglycan fragments, giving rise to free GlcNAc, anhydro-N-acetylmuramic acid and anhydro-N-acetylmuramic acid-linked peptides. In Bordetella bronchiseptica (strain ATCC BAA-588 / NCTC 13252 / RB50) (Alcaligenes bronchisepticus), this protein is Beta-hexosaminidase.